The following is a 389-amino-acid chain: Pre-mRNA-splicing factor PRP46 (389 aa).

WD repeat units lie at residues 83 to 123 (AHQG…LKAV), 126 to 165 (GHVLGIRSLCISKRHPYLFSGGEDKSLRCWDLERSNSDAG), 173 to 212 (GHLGGVYSIGLHPELDVLFSGGKDCVVRVWDIRSRVEAMT), 215 to 254 (GHTNDITSIETDYNDPQVITSSMDGTIRLWDLRKSKTELL), 257 to 298 (NHSK…NEFG), 308 to 347 (DNSRIINTLAINPVTNTLFSGYDDGKLEFYNYTTGNLQQS), and 356 to 389 (PEQSAIYASTFDMSGLRLLTCHGDKSIRIWGTSY).

Belongs to the WD repeat PRL1/PRL2 family. Associated with the spliceosome.

The protein localises to the cytoplasm. It is found in the nucleus. In terms of biological role, involved in pre-mRNA splicing and required for cell cycle progression at G2/M. This chain is Pre-mRNA-splicing factor PRP46 (PRP46), found in Candida albicans (strain SC5314 / ATCC MYA-2876) (Yeast).